The following is a 77-amino-acid chain: MARVCKVTGKRPMVGNNVSHANNKTKRRFLPNLQYRRFWVESENRWVRMRVSNAALRTIDKVGIDAVLADLRARGEI.

Belongs to the bacterial ribosomal protein bL28 family.

The protein is Large ribosomal subunit protein bL28 of Laribacter hongkongensis (strain HLHK9).